Reading from the N-terminus, the 507-residue chain is ATP synthase subunit alpha (507 aa).

169 to 176 (GDRQIGKT) contacts ATP.

This sequence belongs to the ATPase alpha/beta chains family. As to quaternary structure, F-type ATPases have 2 components, CF(1) - the catalytic core - and CF(0) - the membrane proton channel. CF(1) has five subunits: alpha(3), beta(3), gamma(1), delta(1), epsilon(1). CF(0) has three main subunits: a(1), b(2) and c(9-12). The alpha and beta chains form an alternating ring which encloses part of the gamma chain. CF(1) is attached to CF(0) by a central stalk formed by the gamma and epsilon chains, while a peripheral stalk is formed by the delta and b chains.

The protein resides in the cell inner membrane. It carries out the reaction ATP + H2O + 4 H(+)(in) = ADP + phosphate + 5 H(+)(out). In terms of biological role, produces ATP from ADP in the presence of a proton gradient across the membrane. The alpha chain is a regulatory subunit. This Desulfotalea psychrophila (strain LSv54 / DSM 12343) protein is ATP synthase subunit alpha.